We begin with the raw amino-acid sequence, 431 residues long: Selenocysteine lyase (431 aa).

N6-(pyridoxal phosphate)lysine is present on Lys-239. The active-site S-selanylcysteine intermediate is the Cys-367.

Belongs to the class-V pyridoxal-phosphate-dependent aminotransferase family. As to quaternary structure, homodimer. Pyridoxal 5'-phosphate is required as a cofactor.

It is found in the cytoplasm. The protein resides in the cytosol. The enzyme catalyses L-selenocysteine + AH2 = hydrogenselenide + L-alanine + A + H(+). Functionally, catalyzes the decomposition of L-selenocysteine to L-alanine and elemental selenium. The polypeptide is Selenocysteine lyase (scly) (Xenopus tropicalis (Western clawed frog)).